The primary structure comprises 258 residues: MKTPFGKAAAGQRSRTGAGHGSVSVTMIKRKAAHKKHRSRPTSQPRRNIVGCRIQHGWKDGDEPLTQWKGTVLDQVPVNPSLYLIKYDGFDCVYGLELHRDERVSSLEVLPNRVASSRISDTHLAEIMVGKAVEHIFETEEGSKNEWRGMVLAQAPVMNTWFYITYEKDPVLYMYQLLDDYKDGDLRILQDSNDSPLAEREPGEVIDSLVGKQVEYAKDDGSKRTGMVIHQVEAKPSVYFIKFDDDFHIYVYDLVKTS.

Residues 1–23 (MKTPFGKAAAGQRSRTGAGHGSV) are disordered. Tudor-like domain stretches follow at residues 50–99 (VGCR…LELH), 129–178 (VGKA…YQLL), and 210–255 (VGKQ…YDLV). 2 histone H3K4me3 and H3R8me2a binding regions span residues Glu-138 and 246–248 (DFH).

The protein belongs to the SPIN/STSY family. Interacts with C11orf84/SPINDOC.

Its function is as follows. Exhibits H3K4me3-binding activity. This Pongo abelii (Sumatran orangutan) protein is Spindlin-3 (SPIN3).